A 260-amino-acid polypeptide reads, in one-letter code: uncharacterized protein (260 aa).

This is an uncharacterized protein from Aquifex aeolicus (strain VF5).